A 324-amino-acid chain; its full sequence is MMSQQDLPTLFYSGKSNSAVPIISESELQTITAEPWLEISKKGLQLEGLNFDRQGQLFLLDVFEGNIFKINPETKEIKRPFVSHKANPAAIKIHKDGRLFVCYLGDFKSTGGIFAATENGDNLQDIIEDLSTAYCIDDMVFDSKGGFYFTDFRGYSTNPLGGVYYVSPDFRTVTPIIQNISVANGIALSTDEKVLWVTETTANRLHRIALEDDGVTIQPFGATIPYYFTGHEGPDSCCIDSDDNLYVAMYGQGRVLVFNKRGYPIGQILIPGRDEGHMLRSTHPQFIPGTNQLIICSNDIEMGGGSMLYTVNGFAKGHQSFQFQ.

Ca(2+) is bound by residues Glu47, Ser109, Gly111, Asp129, Thr132, Tyr134, Asp137, Asn184, Asp235, and Ser236. Asp235 serves as the catalytic Proton donor.

The protein belongs to the SMP-30/CGR1 family. The cofactor is Ca(2+).

It is found in the cytoplasm. Exhibits lactonase activity. Acts in cells with perturbed membrane integrity and is possibly related to the membrane homeostasis. This chain is Lactonase drp35 (drp35), found in Staphylococcus aureus (strain USA300).